The primary structure comprises 296 residues: Small ribosomal subunit biogenesis GTPase RsgA (296 aa).

The CP-type G domain maps to 65 to 226; it reads TNELIRPPIS…VADTPGFSSL (162 aa). GTP contacts are provided by residues 114 to 117 and 169 to 177; these read TKMD and GQSGVGKSS. Cysteine 250, cysteine 255, histidine 257, and cysteine 263 together coordinate Zn(2+).

Belongs to the TRAFAC class YlqF/YawG GTPase family. RsgA subfamily. Monomer. Associates with 30S ribosomal subunit, binds 16S rRNA. It depends on Zn(2+) as a cofactor.

The protein localises to the cytoplasm. One of several proteins that assist in the late maturation steps of the functional core of the 30S ribosomal subunit. Helps release RbfA from mature subunits. May play a role in the assembly of ribosomal proteins into the subunit. Circularly permuted GTPase that catalyzes slow GTP hydrolysis, GTPase activity is stimulated by the 30S ribosomal subunit. In Bacillus velezensis (strain DSM 23117 / BGSC 10A6 / LMG 26770 / FZB42) (Bacillus amyloliquefaciens subsp. plantarum), this protein is Small ribosomal subunit biogenesis GTPase RsgA.